A 954-amino-acid chain; its full sequence is Glycine dehydrogenase (decarboxylating) (954 aa).

Lys704 bears the N6-(pyridoxal phosphate)lysine mark.

It belongs to the GcvP family. The glycine cleavage system is composed of four proteins: P, T, L and H. Pyridoxal 5'-phosphate serves as cofactor.

The enzyme catalyses N(6)-[(R)-lipoyl]-L-lysyl-[glycine-cleavage complex H protein] + glycine + H(+) = N(6)-[(R)-S(8)-aminomethyldihydrolipoyl]-L-lysyl-[glycine-cleavage complex H protein] + CO2. In terms of biological role, the glycine cleavage system catalyzes the degradation of glycine. The P protein binds the alpha-amino group of glycine through its pyridoxal phosphate cofactor; CO(2) is released and the remaining methylamine moiety is then transferred to the lipoamide cofactor of the H protein. The protein is Glycine dehydrogenase (decarboxylating) of Vibrio parahaemolyticus serotype O3:K6 (strain RIMD 2210633).